A 483-amino-acid chain; its full sequence is Cyclic AMP-dependent transcription factor ATF-7 (483 aa).

A transactivation domain region spans residues 1-285 (MGDDRPFVCN…GMVVGTASTM (285 aa)). Residues 7-31 (FVCNAPGCGQRFTNEDHLAVHKHKH) form a C2H2-type zinc finger. Phosphothreonine; by MAPK11 is present on T51. A phosphothreonine mark is found at T53 and T101. A Glycyl lysine isopeptide (Lys-Gly) (interchain with G-Cter in SUMO1) cross-link involves residue K107. Disordered stretches follow at residues 110–148 (EPVEVDSSPPDSPASSPCSPPLKEKEVTPKPVLISTPTP) and 299–345 (HPDA…NRAA). 2 stretches are compositionally biased toward low complexity: residues 114–126 (VDSSPPDSPASSP) and 307–320 (QPQVSPAQPTPSTG). Positions 325–483 (RTVDEDPDER…MTPQSQSAGR (159 aa)) are essential for binding adenovirus 2 E1A. A compositionally biased stretch (basic and acidic residues) spans 326-343 (TVDEDPDERRQRFLERNR). The bZIP domain occupies 332 to 395 (DERRQRFLER…AQLKQLLLAH (64 aa)). The basic motif stretch occupies residues 334–354 (RRQRFLERNRAAASRCRQKRK). The leucine-zipper stretch occupies residues 360-388 (LEKKAEELTSQNIQLSNEVTLLRNEVAQL). The tract at residues 407–439 (TQGYLESPKESSEPTGSPAPVIQHSSATAPSNG) is disordered. Residues S413 and S423 each carry the phosphoserine modification. A compositionally biased stretch (polar residues) spans 429-439 (QHSSATAPSNG).

This sequence belongs to the bZIP family. Homodimer; binds DNA as homodimer. Heterodimer; heterodimerizes with other members of ATF family and with JUN family members. Interacts with JNK2; the interaction does not phosphorylate ATF7 but acts as a docking site for other ATF-associated partners such as JUN family members. Interacts (via its transactivation domain) with TAF12 (isoforms TAFII15 and TAFII20); the interaction potentiates the transactivation activity (isoform TAFII20 only) and is inhibited by ATF7 sumoylation. Interacts with TAF4; the interaction inhibits the TAF12-dependent transactivation. Interacts with MAPK9; the interaction does not phosphorylate ATF7 but acts as a docking site for ATF7-associated partners such as JUN. Interacts with Ku complex components XRCC6 and XRCC7. Interacts with TERT. In terms of assembly, (Microbial infection) Interacts with adenovirus 2 E1A; the interaction enhances the ATF7-mediated viral transactivation activity which requires the zinc-binding domains of both E1A and ATF7. In terms of processing, on EGF stimulation, phosphorylated first on Thr-53 allowing subsequent phosphorylation on Thr-51. This latter phosphorylation prevents sumoylation, increases binding to TAF12 and enhances transcriptional activity. Post-translationally, sumoylation delays nuclear localization and inhibits transactivation activity through preventing binding to TAF12. RANBP2 appears to be the specific E3 ligase. On EGF stimulation, phosphorylated first on Thr-53 allowing subsequent phosphorylation on Thr-51. This latter phosphorylation prevents sumoylation, increases binding to TAF12 and enhances transcriptional activity. Social isolation stress as well as TNF-alpha also induce the phosphorylation of ATF7. Phosphorylated in proliferating colonic and small intestinal epithelial cells. In terms of tissue distribution, expressed in various tissues including heart, brain, placenta, lung and skeletal muscle. Highest levels in skeletal muscle. Lowest in lung and placenta. Strongly expressed in skeletal muscle. Also expressed at lower levels in heart and lung.

The protein resides in the nucleus. It localises to the nucleoplasm. It is found in the chromosome. Its subcellular location is the telomere. The protein localises to the cytoplasm. Its function is as follows. Stress-responsive chromatin regulator that plays a role in various biological processes including innate immunological memory, adipocyte differentiation or telomerase regulation. In absence of stress, contributes to the formation of heterochromatin and heterochromatin-like structure by recruiting histone H3K9 tri- and di-methyltransferases thus silencing the transcription of target genes such as STAT1 in adipocytes, or genes involved in innate immunity in macrophages and adipocytes. Stress induces ATF7 phosphorylation that disrupts interactions with histone methyltransferase and enhances the association with coactivators containing histone acetyltransferase and/or histone demethylase, leading to disruption of the heterochromatin-like structure and subsequently transcriptional activation. In response to TNF-alpha, which is induced by various stresses, phosphorylated ATF7 and telomerase are released from telomeres leading to telomere shortening. Also plays a role in maintaining epithelial regenerative capacity and protecting against cell death during intestinal epithelial damage and repair. Functionally, acts as a dominant repressor of the E-selectin/NF-ELAM1/delta-A promoter. Acts as a negative regulator, inhibiting both ATF2 and ATF7 transcriptional activities. It may exert these effects by sequestrating in the cytoplasm the Thr-53 phosphorylating kinase, preventing activation. This is Cyclic AMP-dependent transcription factor ATF-7 (ATF7) from Homo sapiens (Human).